We begin with the raw amino-acid sequence, 201 residues long: Homeobox protein ceh-28 (201 aa).

Residues 72-84 are compositionally biased toward polar residues; it reads SYYSSPSQNQRSY. Residues 72-94 are disordered; that stretch reads SYYSSPSQNQRSYQNHRQHSNPD. The homeobox DNA-binding region spans 104–163; sequence KRKPRVLFTQHQVNELEERFKKQRYVTATEREELAQCLGLTATQVKIWFQNRRYKCKRLA.

This sequence belongs to the NK-2 homeobox family.

It is found in the nucleus. Probable transcription factor that regulates neuronal differention, including synapse assembly of the cholinergic motor neuron M4. Activates expression of growth factor, neuropeptide and transcription factor genes, such as TGF-beta dbl-1, FMRFamide-like flp-5 and transcription repressor zag-1, in the M4 neuron. Required for pharynx peristalsis. The sequence is that of Homeobox protein ceh-28 from Caenorhabditis elegans.